Here is a 421-residue protein sequence, read N- to C-terminus: Gamma-glutamyl phosphate reductase (421 aa).

The protein belongs to the gamma-glutamyl phosphate reductase family.

The protein resides in the cytoplasm. It catalyses the reaction L-glutamate 5-semialdehyde + phosphate + NADP(+) = L-glutamyl 5-phosphate + NADPH + H(+). Its pathway is amino-acid biosynthesis; L-proline biosynthesis; L-glutamate 5-semialdehyde from L-glutamate: step 2/2. Its function is as follows. Catalyzes the NADPH-dependent reduction of L-glutamate 5-phosphate into L-glutamate 5-semialdehyde and phosphate. The product spontaneously undergoes cyclization to form 1-pyrroline-5-carboxylate. The chain is Gamma-glutamyl phosphate reductase from Nocardia farcinica (strain IFM 10152).